A 211-amino-acid chain; its full sequence is Urease accessory protein UreG (211 aa).

8 to 15 (GPVGSGKT) serves as a coordination point for GTP.

Belongs to the SIMIBI class G3E GTPase family. UreG subfamily. As to quaternary structure, homodimer. UreD, UreF and UreG form a complex that acts as a GTP-hydrolysis-dependent molecular chaperone, activating the urease apoprotein by helping to assemble the nickel containing metallocenter of UreC. The UreE protein probably delivers the nickel.

The protein localises to the cytoplasm. Its function is as follows. Facilitates the functional incorporation of the urease nickel metallocenter. This process requires GTP hydrolysis, probably effectuated by UreG. The chain is Urease accessory protein UreG from Metallosphaera sedula (strain ATCC 51363 / DSM 5348 / JCM 9185 / NBRC 15509 / TH2).